The primary structure comprises 344 residues: MAGGRPAGSAIEMEGAMRTLPSSGRPSGTGWQSRGPLFGRNYGLSPGSRLLPPRCQENADPQKMAFLLRKQWTLYSVSPLYKFSSADLKDYARMLGVFIAAEKQKGLAVDVDGELGIKVAMSGLPELRGSEQDPAAVLVQLSLRSSVSPKNSEEKLIWSGWFCCVAGDDLLENLPENFTCLPLFLVNGAESYTAIVGSWFQKTFDCCFRRLAISPLNLTWMAAMWTGCKVDKNTAATELLFSVPHLPQPLDISYAIHPEDAKALWDTVQKTPGEITQEEVDVFMECLYSHFHRHFKIHLSATKLVKVSTGIASAHCDGIIKFLQSQYLIGVLMLLTELAISQIQ.

A disordered region spans residues 1-32; sequence MAGGRPAGSAIEMEGAMRTLPSSGRPSGTGWQ. The segment covering 20 to 32 has biased composition (polar residues); it reads LPSSGRPSGTGWQ.

Belongs to the CENP-L/IML3 family. Component of the CENPA-HI complex, at least composed of CENPH, CENPI, CENPK, CENPL, CENPM, CENPO and CENPP.

The protein resides in the nucleus. Its subcellular location is the chromosome. It is found in the centromere. Its function is as follows. Component of the CENPA-HI complex, a centromeric complex involved in assembly of kinetochore proteins, mitotic progression and chromosome segregation. This chain is Centromere protein L (CENPL), found in Gallus gallus (Chicken).